Consider the following 1373-residue polypeptide: DNA-directed RNA polymerase subunit beta (1373 aa).

It belongs to the RNA polymerase beta chain family. As to quaternary structure, the RNAP catalytic core consists of 2 alpha, 1 beta, 1 beta' and 1 omega subunit. When a sigma factor is associated with the core the holoenzyme is formed, which can initiate transcription.

The catalysed reaction is RNA(n) + a ribonucleoside 5'-triphosphate = RNA(n+1) + diphosphate. Its function is as follows. DNA-dependent RNA polymerase catalyzes the transcription of DNA into RNA using the four ribonucleoside triphosphates as substrates. This is DNA-directed RNA polymerase subunit beta from Lawsonia intracellularis (strain PHE/MN1-00).